Reading from the N-terminus, the 185-residue chain is uncharacterized protein (185 aa).

5 helical membrane passes run 4–24 (IAWM…LGLA), 35–55 (GLLF…ATGV), 60–80 (GASA…SIAY), 123–143 (VLAY…INDS), and 152–172 (ILKL…SYFI).

The protein resides in the cell membrane. This is an uncharacterized protein from Bacillus subtilis (strain 168).